Consider the following 30-residue polypeptide: Thrombin-like enzyme LmrSP-2 (30 aa).

The protein belongs to the peptidase S1 family. Snake venom subfamily. In terms of tissue distribution, expressed by the venom gland.

Its subcellular location is the secreted. Thrombin-like snake venom serine protease that cleaves alpha-chain of fibrinogen (FGA) releases only fibrinopeptide A. Shows coagulant, esterase and amidase activities. This is Thrombin-like enzyme LmrSP-2 from Lachesis muta rhombeata (Bushmaster).